The chain runs to 306 residues: Ribosomal protein L11 methyltransferase (306 aa).

Residues Thr-154, Gly-179, Asp-201, and Asn-242 each coordinate S-adenosyl-L-methionine.

The protein belongs to the methyltransferase superfamily. PrmA family.

It is found in the cytoplasm. It carries out the reaction L-lysyl-[protein] + 3 S-adenosyl-L-methionine = N(6),N(6),N(6)-trimethyl-L-lysyl-[protein] + 3 S-adenosyl-L-homocysteine + 3 H(+). Functionally, methylates ribosomal protein L11. This is Ribosomal protein L11 methyltransferase from Xylella fastidiosa (strain 9a5c).